The primary structure comprises 140 residues: Nucleoside diphosphate kinase (140 aa).

The ATP site is built by Lys-11, Phe-59, Arg-87, Thr-93, Arg-104, and Asn-114. His-117 serves as the catalytic Pros-phosphohistidine intermediate.

It belongs to the NDK family. As to quaternary structure, homotetramer. It depends on Mg(2+) as a cofactor.

It localises to the cytoplasm. It carries out the reaction a 2'-deoxyribonucleoside 5'-diphosphate + ATP = a 2'-deoxyribonucleoside 5'-triphosphate + ADP. It catalyses the reaction a ribonucleoside 5'-diphosphate + ATP = a ribonucleoside 5'-triphosphate + ADP. Major role in the synthesis of nucleoside triphosphates other than ATP. The ATP gamma phosphate is transferred to the NDP beta phosphate via a ping-pong mechanism, using a phosphorylated active-site intermediate. The polypeptide is Nucleoside diphosphate kinase (Agrobacterium fabrum (strain C58 / ATCC 33970) (Agrobacterium tumefaciens (strain C58))).